Reading from the N-terminus, the 288-residue chain is Aminoglycoside N(3)-acetyltransferase VII (288 aa).

It belongs to the antibiotic N-acetyltransferase family.

The catalysed reaction is a 2-deoxystreptamine antibiotic + acetyl-CoA = an N(3)-acetyl-2-deoxystreptamine antibiotic + CoA + H(+). Its function is as follows. Resistance to paromomycin. In Streptomyces paromomycinus (Streptomyces rimosus subsp. paromomycinus), this protein is Aminoglycoside N(3)-acetyltransferase VII (aacC7).